A 279-amino-acid polypeptide reads, in one-letter code: Toxin TxP-I (279 aa).

The signal sequence occupies residues 1 to 14 (MNLFFLFIIPTILA). The propeptide occupies 15-27 (VKPFRSFNNISLI).

Contains several disulfide bonds. As to expression, posterior glands which appear to be connected with the stylet through a series of ducts.

The protein localises to the secreted. Its function is as follows. Part of a complex mixture of neurotoxins which P.tritici utilizes to capture prey. It has contracting-paralyzing activity in insects. The polypeptide is Toxin TxP-I (Pyemotes tritici (Straw itch mite)).